The primary structure comprises 227 residues: PKHD-type hydroxylase Bxeno_B2756 (227 aa).

One can recognise a Fe2OG dioxygenase domain in the interval 80–179; that stretch reads QVYPPLFNRY…RVASFFWVQS (100 aa). Residues His98, Asp100, and His160 each coordinate Fe cation. Arg170 is a 2-oxoglutarate binding site.

The cofactor is Fe(2+). L-ascorbate serves as cofactor.

This is PKHD-type hydroxylase Bxeno_B2756 from Paraburkholderia xenovorans (strain LB400).